Reading from the N-terminus, the 152-residue chain is Calmodulin-like protein 2 (152 aa).

EF-hand domains lie at Met-1–Met-36, Val-37–Glu-72, Glu-74–Lys-109, and Arg-112–Ala-147. Ca(2+)-binding residues include Asp-14, Asn-16, Asp-18, Lys-20, Glu-25, Asp-50, Asn-52, Asp-54, Glu-61, Asp-87, Asn-89, Asp-91, Glu-98, Asp-125, Asp-127, Asp-129, Met-131, and Glu-136.

The protein belongs to the calmodulin family.

Its function is as follows. Potential calcium sensor that is required for pollen tube attraction for ovule fertilization. This Arabidopsis thaliana (Mouse-ear cress) protein is Calmodulin-like protein 2 (CML2).